Reading from the N-terminus, the 634-residue chain is Chaperone protein HtpG (634 aa).

Positions 1 to 342 (MTVASHKETL…SNDLPLNISR (342 aa)) are a; substrate-binding. The b stretch occupies residues 343-559 (EILQNNRVID…QHDMSGYLER (217 aa)). Residues 560-634 (LLKEAGQQAP…LNSLLLAMAD (75 aa)) are c.

This sequence belongs to the heat shock protein 90 family. In terms of assembly, homodimer.

It localises to the cytoplasm. Functionally, molecular chaperone. Has ATPase activity. This chain is Chaperone protein HtpG, found in Nitrosococcus oceani (strain ATCC 19707 / BCRC 17464 / JCM 30415 / NCIMB 11848 / C-107).